We begin with the raw amino-acid sequence, 396 residues long: S-arrestin (396 aa).

The protein belongs to the arrestin family.

Arrestin is one of the major proteins of the ros (retinal rod outer segments); it binds to photoactivated-phosphorylated rhodopsin, thereby apparently preventing the transducin-mediated activation of phosphodiesterase. The protein is S-arrestin of Lithobates pipiens (Northern leopard frog).